A 132-amino-acid polypeptide reads, in one-letter code: Ribosome-binding factor A (132 aa).

The protein belongs to the RbfA family. Monomer. Binds 30S ribosomal subunits, but not 50S ribosomal subunits or 70S ribosomes.

It localises to the cytoplasm. Functionally, one of several proteins that assist in the late maturation steps of the functional core of the 30S ribosomal subunit. Associates with free 30S ribosomal subunits (but not with 30S subunits that are part of 70S ribosomes or polysomes). Required for efficient processing of 16S rRNA. May interact with the 5'-terminal helix region of 16S rRNA. This chain is Ribosome-binding factor A, found in Burkholderia vietnamiensis (strain G4 / LMG 22486) (Burkholderia cepacia (strain R1808)).